The sequence spans 527 residues: Baeyer-Villiger monooxygenase (527 aa).

FAD contacts are provided by residues S36, E56, T64 to V67, D76, Y82, and I125. NADP(+) is bound at residue A74–D76. Residues T199 to Q205, R222 to T223, and K308 to R309 each bind NADP(+). M415 serves as a coordination point for FAD.

Belongs to the FAD-binding monooxygenase family. It depends on FAD as a cofactor.

Functionally, catalyzes a Baeyer-Villiger oxidation reaction, i.e. the insertion of an oxygen atom into a carbon-carbon bond adjacent to a carbonyl, which converts ketones to esters or lactones using NADPH and/or NADH as an electron donor. Thus, can convert bicyclo[3.2.0]hept-2-en-6-one into the oxidative lactone products 2-oxabicyclo[3.3.0]oct-6-en-3-one and 3-oxabicyclo[3.3.0]oct-6-en-2-one. Is also able to catalyze the sulfoxidation of methyl phenyl sulfide (thioanisole). The polypeptide is Baeyer-Villiger monooxygenase (Pseudomonas aeruginosa (strain ATCC 15692 / DSM 22644 / CIP 104116 / JCM 14847 / LMG 12228 / 1C / PRS 101 / PAO1)).